A 376-amino-acid chain; its full sequence is Flap endonuclease 1 (376 aa).

The interval 1-105 (MGIKGLSKLL…GELHKRKENA (105 aa)) is N-domain. Asp-34 contacts Mg(2+). Residues Arg-47 and Arg-71 each contribute to the DNA site. Mg(2+) contacts are provided by Asp-87, Glu-159, Glu-161, Asp-180, and Asp-182. An I-domain region spans residues 123–254 (QAKKLMKRTA…ITAFELIQQY (132 aa)). Glu-159 contacts DNA. DNA-binding residues include Gly-232 and Asp-234. Asp-234 serves as a coordination point for Mg(2+). The interval 336–344 (AQGRLDSFF) is interaction with PCNA. Residues 354-376 (SEAASGVKRKKPTTKAKESRKKK) form a disordered region. Basic residues predominate over residues 360–376 (VKRKKPTTKAKESRKKK).

Belongs to the XPG/RAD2 endonuclease family. FEN1 subfamily. Interacts with PCNA. Three molecules of FEN1 bind to one PCNA trimer with each molecule binding to one PCNA monomer. PCNA stimulates the nuclease activity without altering cleavage specificity. The cofactor is Mg(2+). Phosphorylated. Phosphorylation upon DNA damage induces relocalization to the nuclear plasma.

It localises to the nucleus. The protein localises to the nucleolus. Its subcellular location is the nucleoplasm. The protein resides in the mitochondrion. Structure-specific nuclease with 5'-flap endonuclease and 5'-3' exonuclease activities involved in DNA replication and repair. During DNA replication, cleaves the 5'-overhanging flap structure that is generated by displacement synthesis when DNA polymerase encounters the 5'-end of a downstream Okazaki fragment. It enters the flap from the 5'-end and then tracks to cleave the flap base, leaving a nick for ligation. Also involved in the long patch base excision repair (LP-BER) pathway, by cleaving within the apurinic/apyrimidinic (AP) site-terminated flap. Acts as a genome stabilization factor that prevents flaps from equilibrating into structures that lead to duplications and deletions. Also possesses 5'-3' exonuclease activity on nicked or gapped double-stranded DNA, and exhibits RNase H activity. Also involved in replication and repair of rDNA and in repairing mitochondrial DNA. The chain is Flap endonuclease 1 from Entamoeba histolytica (strain ATCC 30459 / HM-1:IMSS / ABRM).